Here is a 632-residue protein sequence, read N- to C-terminus: Probable membrane transporter protein MamO (632 aa).

A helical membrane pass occupies residues 25–45 (APVSILAFLILVTFAWGAYLL). Residues 78 to 268 (LYYTVPPAVV…VIVSHLQDVV (191 aa)) are protease-like. Positions 148 and 263 each coordinate a divalent metal cation. The next 7 membrane-spanning stretches (helical) occupy residues 340-360 (IGGYSIADILGLGMLALAAGV), 412-432 (LVQWDKVKPLIPWGVAGVVIG), 434-454 (FIGNAIGDSVVGVLLGLFALI), 513-533 (AVLGLPMGLFSGILGISGGVI), 550-570 (IANSSVLVFWASVAGSVVAFI), 582-602 (APVTLALVMIPGAYVGGILGA), and 612-632 (VLKGIYAATMAAIAIKMLTTV). The tract at residues 365 to 632 (MTMGGGVLQV…AIAIKMLTTV (268 aa)) is TSUP-like.

This sequence in the N-terminal section; belongs to the peptidase S1C family. The protein in the C-terminal section; belongs to the 4-toluene sulfonate uptake permease (TSUP) (TC 2.A.102) family. A metal cation serves as cofactor. Post-translationally, subject to proteolytic cleavage by MamE.

Its subcellular location is the magnetosome membrane. Its function is as follows. Plays 2 roles; promotes magnetite nucleation/formation and activates the MamE protease. Despite its near conservation of a protease-like sequence, this is probably not a protease. Required in conjunction with MamP for proteolysis of at least MamE, itself and MamP. May transport a solute that controls MamE's protease activity. May place individual iron atoms into the magnetite lattice. One of 7 genes (mamLQBIEMO) able to induce magnetosome membrane biogenesis; coexpression of mamLQRBIEMO in a deletion of the 17 gene mamAB operon restores magnetosome vesicle formation but not magnetite biosynthesis. The sequence is that of Probable membrane transporter protein MamO from Magnetospirillum gryphiswaldense (strain DSM 6361 / JCM 21280 / NBRC 15271 / MSR-1).